The sequence spans 83 residues: MRLFLSLPVLVVVLSIVLEGPAPAQGTPDVSSALDKLKEFGNTLEDKARELISRIKQNELSAKMREWFSETFQKVKEKLKIDS.

The signal sequence occupies residues 1-26 (MRLFLSLPVLVVVLSIVLEGPAPAQG).

The protein belongs to the apolipoprotein C1 family.

It localises to the secreted. Its function is as follows. Inhibitor of lipoprotein binding to the low density lipoprotein (LDL) receptor, LDL receptor-related protein, and very low density lipoprotein (VLDL) receptor. Associates with high density lipoproteins (HDL) and the triacylglycerol-rich lipoproteins in the plasma and makes up about 10% of the protein of the VLDL and 2% of that of HDL. Appears to interfere directly with fatty acid uptake and is also the major plasma inhibitor of cholesteryl ester transfer protein (CETP). Binds free fatty acids and reduces their intracellular esterification. Modulates the interaction of APOE with beta-migrating VLDL and inhibits binding of beta-VLDL to the LDL receptor-related protein. The chain is Apolipoprotein C-I, basic form (APOC1B) from Pan troglodytes (Chimpanzee).